Here is a 218-residue protein sequence, read N- to C-terminus: Large ribosomal subunit protein uL3 (218 aa).

Belongs to the universal ribosomal protein uL3 family. Part of the 50S ribosomal subunit. Forms a cluster with proteins L14 and L19.

Its function is as follows. One of the primary rRNA binding proteins, it binds directly near the 3'-end of the 23S rRNA, where it nucleates assembly of the 50S subunit. The chain is Large ribosomal subunit protein uL3 from Brachyspira pilosicoli (Serpulina pilosicoli).